We begin with the raw amino-acid sequence, 449 residues long: UDP-N-acetylmuramoylalanine--D-glutamate ligase (449 aa).

Position 107 to 113 (107 to 113 (GSNGKST)) interacts with ATP.

Belongs to the MurCDEF family.

It is found in the cytoplasm. It catalyses the reaction UDP-N-acetyl-alpha-D-muramoyl-L-alanine + D-glutamate + ATP = UDP-N-acetyl-alpha-D-muramoyl-L-alanyl-D-glutamate + ADP + phosphate + H(+). The protein operates within cell wall biogenesis; peptidoglycan biosynthesis. Functionally, cell wall formation. Catalyzes the addition of glutamate to the nucleotide precursor UDP-N-acetylmuramoyl-L-alanine (UMA). This is UDP-N-acetylmuramoylalanine--D-glutamate ligase from Hydrogenovibrio crunogenus (strain DSM 25203 / XCL-2) (Thiomicrospira crunogena).